Consider the following 340-residue polypeptide: MLDPRARTLLKTLIERYIADGQPVGSRTLSRYSGLELSPATIRNVMSDLEELGLVSSPHTSAGRVPTPRGYRLFVDTMLTVETPIDAEAVARQVQHTLQAGEPQQRVVAAAASVLSNLSQFAGVVLTPRRSHVFKQIEFMRLSDKRILLIIVTPEGDVQNRMLATPRDYSPSQLTEASNYINAHFAGLSFDEVRRRLRDEIDQLRGDMTTLMHAAVTASTEVPDTEDTVLISGERNLLEVADLSSDMARLRKLFDVFDQKTGLLQLLDVSSHAQGVQIFIGGESTLVPIEEMSVVTAPYEVNGQIVGTLGVIGPTRMAYNRVIPIVDITARLLSLTLSQQ.

The protein belongs to the HrcA family.

Its function is as follows. Negative regulator of class I heat shock genes (grpE-dnaK-dnaJ and groELS operons). Prevents heat-shock induction of these operons. The protein is Heat-inducible transcription repressor HrcA of Burkholderia ambifaria (strain MC40-6).